The primary structure comprises 59 residues: Protein ORF5a (59 aa).

A helical; Signal-anchor for type III membrane protein transmembrane segment spans residues 13-33 (VIYDCIAILALGCAITCLLLI).

Its subcellular location is the membrane. The protein is Protein ORF5a (GP5) of Equine arteritis virus (strain Bucyrus) (EAV).